Here is a 379-residue protein sequence, read N- to C-terminus: Queuine tRNA-ribosyltransferase (379 aa).

Asp-94 functions as the Proton acceptor in the catalytic mechanism. Substrate contacts are provided by residues 94–98 (DSGGF), Asp-148, Gln-191, and Gly-218. Positions 249 to 255 (GVGSPDS) are RNA binding. The active-site Nucleophile is the Asp-268. The segment at 273–277 (TRIGR) is RNA binding; important for wobble base 34 recognition. Cys-306, Cys-308, Cys-311, and His-337 together coordinate Zn(2+).

Belongs to the queuine tRNA-ribosyltransferase family. In terms of assembly, homodimer. Within each dimer, one monomer is responsible for RNA recognition and catalysis, while the other monomer binds to the replacement base PreQ1. The cofactor is Zn(2+).

It carries out the reaction 7-aminomethyl-7-carbaguanine + guanosine(34) in tRNA = 7-aminomethyl-7-carbaguanosine(34) in tRNA + guanine. It participates in tRNA modification; tRNA-queuosine biosynthesis. In terms of biological role, catalyzes the base-exchange of a guanine (G) residue with the queuine precursor 7-aminomethyl-7-deazaguanine (PreQ1) at position 34 (anticodon wobble position) in tRNAs with GU(N) anticodons (tRNA-Asp, -Asn, -His and -Tyr). Catalysis occurs through a double-displacement mechanism. The nucleophile active site attacks the C1' of nucleotide 34 to detach the guanine base from the RNA, forming a covalent enzyme-RNA intermediate. The proton acceptor active site deprotonates the incoming PreQ1, allowing a nucleophilic attack on the C1' of the ribose to form the product. After dissociation, two additional enzymatic reactions on the tRNA convert PreQ1 to queuine (Q), resulting in the hypermodified nucleoside queuosine (7-(((4,5-cis-dihydroxy-2-cyclopenten-1-yl)amino)methyl)-7-deazaguanosine). The chain is Queuine tRNA-ribosyltransferase from Anoxybacillus flavithermus (strain DSM 21510 / WK1).